Here is a 255-residue protein sequence, read N- to C-terminus: MRHPLVMGNWKLNGSRHMVNELVANLRTELAGVSGCAVAIAPPEMYLDLAKRAAEGSHIHLGAQNVDVNLSGAFTGETSAEMLKDIGAQYIIIGHSERRTYHKESDELIAKKFAVLKEQGLTPVLCIGETEAENEAGKTEEVCARQIDAVLKTQGAAVFEGVVIAYEPVWAIGTGKSATPAQAQAVHKFIRDHIAKADAKIAEQVIIQYGGSVNAGNAAELFTQPDIDGALVGGASLKADAFAVIVKAAEAAKKA.

Substrate is bound at residue 9–11; the sequence is NWK. Catalysis depends on His95, which acts as the Electrophile. Glu167 (proton acceptor) is an active-site residue. Substrate is bound by residues Gly173, Ser212, and 233-234; that span reads GG.

It belongs to the triosephosphate isomerase family. In terms of assembly, homodimer.

The protein localises to the cytoplasm. The enzyme catalyses D-glyceraldehyde 3-phosphate = dihydroxyacetone phosphate. It functions in the pathway carbohydrate biosynthesis; gluconeogenesis. The protein operates within carbohydrate degradation; glycolysis; D-glyceraldehyde 3-phosphate from glycerone phosphate: step 1/1. Functionally, involved in the gluconeogenesis. Catalyzes stereospecifically the conversion of dihydroxyacetone phosphate (DHAP) to D-glyceraldehyde-3-phosphate (G3P). This is Triosephosphate isomerase from Klebsiella pneumoniae.